Reading from the N-terminus, the 341-residue chain is Malate dehydrogenase, mitochondrial (341 aa).

Residues 35–41 (GAAGGIG) and Asp61 contribute to the NAD(+) site. Residues Arg108 and Arg114 each contribute to the substrate site. NAD(+) is bound by residues Asn121 and 144 to 146 (ITN). Positions 146 and 180 each coordinate substrate. His204 serves as the catalytic Proton acceptor. Met255 contacts NAD(+).

The protein belongs to the LDH/MDH superfamily. MDH type 1 family. In terms of assembly, homodimer.

The protein resides in the mitochondrion matrix. It carries out the reaction (S)-malate + NAD(+) = oxaloacetate + NADH + H(+). Catalyzes the reversible conversion of (S)-malate to oxaloacetate in the citric acid cycle. This Caenorhabditis elegans protein is Malate dehydrogenase, mitochondrial.